The chain runs to 469 residues: Serine/threonine-protein kinase orb6 (469 aa).

The 300-residue stretch at 93 to 392 (FSTIKVIGKG…AIEIMQHPFF (300 aa)) folds into the Protein kinase domain. ATP-binding positions include 99–107 (IGKGAFGEV) and K122. Residue D216 is the Proton acceptor of the active site. The AGC-kinase C-terminal domain maps to 393–467 (TGIDWDHIRE…KKFNYLTMKG (75 aa)).

It belongs to the protein kinase superfamily. Ser/Thr protein kinase family. As to quaternary structure, interacts with mob2.

It carries out the reaction L-seryl-[protein] + ATP = O-phospho-L-seryl-[protein] + ADP + H(+). The enzyme catalyses L-threonyl-[protein] + ATP = O-phospho-L-threonyl-[protein] + ADP + H(+). Functionally, interacts with pak1/shk1 and coordinates cell morphogenesis with the cell cycle. It is essential for maintenance of cell polarity and is involved in mitotic control. In Schizosaccharomyces pombe (strain 972 / ATCC 24843) (Fission yeast), this protein is Serine/threonine-protein kinase orb6 (orb6).